The chain runs to 52 residues: Large ribosomal subunit protein bL32c (52 aa).

It belongs to the bacterial ribosomal protein bL32 family.

It localises to the plastid. It is found in the chloroplast. The chain is Large ribosomal subunit protein bL32c from Eucalyptus globulus subsp. globulus (Tasmanian blue gum).